The following is a 195-amino-acid chain: Cbp/p300-interacting transactivator 1 (195 aa).

Disordered regions lie at residues 1 to 24 (MPTM…NANP) and 51 to 149 (ASNG…SPAI). Residues 54–78 (GTKASGAPTSSSGSPSPISSSTATP) are compositionally biased toward low complexity. Residues 97 to 106 (MQLQKLNSQY) are compositionally biased toward polar residues. Positions 137–148 (SLSPSAGAQSPA) are enriched in low complexity. The Nuclear export signal signature appears at 160-169 (LMSLVVELGL).

It belongs to the CITED family. As to quaternary structure, interacts (via C-terminus) with CREBBP. Interacts with EGR2. Homodimer. Binds to RBM14. Interacts (via N-terminus) with HSPA8; the interaction suppresses the association of CITED1 with p300/CBP and SMAD-mediated transcription transactivation. Interacts (via C-terminus) with TOX3 (via HGM box); the interaction increases estrogen-response element (ERE)-dependent transcription and protection against cell death. Interacts with ESR1; the interaction occurs in a estrogen-dependent manner. Interacts (unphosphorylated form preferentially and via C-terminus) with EP300. In terms of processing, phosphorylated. Phosphorylation changes in a cell cycle-dependent manner and reduces its transcriptional cofactor activity.

The protein resides in the nucleus. The protein localises to the cytoplasm. Its function is as follows. Transcriptional coactivator of the p300/CBP-mediated transcription complex. Enhances SMAD-mediated transcription by strengthening the functional link between the DNA-binding SMAD transcription factors and the p300/CBP transcription coactivator complex. Stimulates estrogen-dependent transactivation activity mediated by estrogen receptors signaling; stabilizes the interaction of estrogen receptor ESR1 and histone acetyltransferase EP300. Positively regulates TGF-beta signaling through its association with the SMAD/p300/CBP-mediated transcriptional coactivator complex. Induces transcription from estrogen-responsive promoters and protection against cell death. Potentiates EGR2-mediated transcriptional activation activity from the ERBB2 promoter. Acts as an inhibitor of osteoblastic mineralization through a cAMP-dependent parathyroid hormone receptor signaling. May play a role in pigmentation of melanocytes. Associates with chromatin to the estrogen-responsive TGF-alpha promoter region in a estrogen-dependent manner. In Bos taurus (Bovine), this protein is Cbp/p300-interacting transactivator 1 (CITED1).